We begin with the raw amino-acid sequence, 935 residues long: UvrABC system protein A (935 aa).

Residue 31 to 38 coordinates ATP; it reads GLSGSGKS. Residues 254–281 form a C4-type zinc finger; sequence CFKCKMSFEELEPLSFSFNSPKGACESC. 2 ABC transporter domains span residues 310-579 and 599-931; these read IFGY…NNHS and KEKH…KFLA. Residue 631–638 coordinates ATP; that stretch reads GVSGSGKS. The segment at 731 to 757 adopts a C4-type zinc-finger fold; the sequence is CEKCQGDGDIKIEMHFLPDVLVQCDSC.

Belongs to the ABC transporter superfamily. UvrA family. Forms a heterotetramer with UvrB during the search for lesions.

Its subcellular location is the cytoplasm. In terms of biological role, the UvrABC repair system catalyzes the recognition and processing of DNA lesions. UvrA is an ATPase and a DNA-binding protein. A damage recognition complex composed of 2 UvrA and 2 UvrB subunits scans DNA for abnormalities. When the presence of a lesion has been verified by UvrB, the UvrA molecules dissociate. The chain is UvrABC system protein A from Helicobacter pylori (strain ATCC 700392 / 26695) (Campylobacter pylori).